A 181-amino-acid polypeptide reads, in one-letter code: UPF0397 protein STER_0346 (181 aa).

A run of 5 helical transmembrane segments spans residues 11-31 (ATGI…IPIF), 45-65 (LFSV…GHAL), 72-92 (GNIS…IGLF), 109-129 (IWFN…VTPI), and 147-167 (FVAG…LLAI).

This sequence belongs to the UPF0397 family.

It localises to the cell membrane. The sequence is that of UPF0397 protein STER_0346 from Streptococcus thermophilus (strain ATCC BAA-491 / LMD-9).